Reading from the N-terminus, the 450-residue chain is Divalent metal cation transporter MntH (450 aa).

A run of 11 helical transmembrane segments spans residues 34-54 (LSFLGPGLLVAVGYMDPGNWI), 61-81 (AQYGYTLLFVILISSLSAMLL), 108-128 (IAIIFWIIAELAIIATDIAEV), 141-161 (IPLIVGALITVLDVFLLLFIM), 170-190 (AIVGTLIFTVLFIFIFEVYIS), 212-232 (GILYIALGIIGATIMPHNLYL), 263-283 (IQLSIAFVVNCLLLVLGASLF), 305-325 (PVLGATMGAIMSTLFAVALLA), 361-381 (SLAVIPVIVCLIIFKGNAAKI), 383-403 (QLLVFSQVFLSIALPFCLIPL), and 422-442 (VNIISWTLIIILSILNVYLIV).

The protein belongs to the NRAMP family.

It localises to the cell membrane. H(+)-stimulated, divalent metal cation uptake system. This chain is Divalent metal cation transporter MntH, found in Staphylococcus aureus (strain JH1).